The chain runs to 359 residues: MMTIQEIYEYLSRFFTPVELIGNGEELIHAPAKIESAQAGEVTFVANKKYLRFLALTEASLVIVERSLAVEEYVGKHSFLKVNDPYSAFVFLLQRFIPPRRIAKQGIAATASIGSNVTIGENVSIGEYAVIGEHCSIGNNTVIAAHSVLLDHVTIGSDVVLFPHVTCYDGTRIGNRVVIHSGAVIGADGFGFAPQQDGSYIKIPQIGIVEIGDDVEIGANTTIDRATLGSTVIESGVKLDNLVQVAHNCRIGAHTVIAAQAGVSGSTTLGNHCIVGGQVGFAGHIEVSDHIQVAAKAGVSKSFMQSGIALRGYPAQPMREQLKYEAQLRTVGDLHAKLKALEQELKALRGSEMPLQNTL.

The active-site Proton acceptor is the His247.

It belongs to the transferase hexapeptide repeat family. LpxD subfamily. Homotrimer.

The catalysed reaction is a UDP-3-O-[(3R)-3-hydroxyacyl]-alpha-D-glucosamine + a (3R)-hydroxyacyl-[ACP] = a UDP-2-N,3-O-bis[(3R)-3-hydroxyacyl]-alpha-D-glucosamine + holo-[ACP] + H(+). It functions in the pathway bacterial outer membrane biogenesis; LPS lipid A biosynthesis. Catalyzes the N-acylation of UDP-3-O-acylglucosamine using 3-hydroxyacyl-ACP as the acyl donor. Is involved in the biosynthesis of lipid A, a phosphorylated glycolipid that anchors the lipopolysaccharide to the outer membrane of the cell. The sequence is that of UDP-3-O-acylglucosamine N-acyltransferase from Chlorobium chlorochromatii (strain CaD3).